The sequence spans 323 residues: MIRSVVRGFGAALPKRVMTNRDMEAIVDTSDEWIVQRTGIRQRYVAGDDETTASLGEAAARAALANGGLTPADIDLVICATSTPDNTFPATSVNIQNRLGMSHGFAFDVQAVCTGFVYAVTTADAYIRGGLAKRVLVIGAETFSRILDWNDRTTCVLFGDGAGAIILEATEGEGTVADRGVLTAHLRSDGSHKEKLYVDGGPSTTGTVGKLRMEGREVFKYAVGMITDVIQAAFDSTGTTADDLDWLVPHQANRRIIDGSAKKLNIDAAKVVITVDLHGNTSAASIPLALATAAGDGRIKKGDLVMLEAMGGGFTWGAVLLRW.

Active-site residues include Cys-113 and His-250. Residues 251–255 (QANRR) form an ACP-binding region. Residue Asn-280 is part of the active site.

Belongs to the thiolase-like superfamily. FabH family. Homodimer.

The protein localises to the cytoplasm. The enzyme catalyses malonyl-[ACP] + acetyl-CoA + H(+) = 3-oxobutanoyl-[ACP] + CO2 + CoA. It participates in lipid metabolism; fatty acid biosynthesis. Catalyzes the condensation reaction of fatty acid synthesis by the addition to an acyl acceptor of two carbons from malonyl-ACP. Catalyzes the first condensation reaction which initiates fatty acid synthesis and may therefore play a role in governing the total rate of fatty acid production. Possesses both acetoacetyl-ACP synthase and acetyl transacylase activities. Its substrate specificity determines the biosynthesis of branched-chain and/or straight-chain of fatty acids. This is Beta-ketoacyl-[acyl-carrier-protein] synthase III from Rhizobium johnstonii (strain DSM 114642 / LMG 32736 / 3841) (Rhizobium leguminosarum bv. viciae).